We begin with the raw amino-acid sequence, 252 residues long: Chaperone protein AggD (252 aa).

The N-terminal stretch at M1–A22 is a signal peptide.

Belongs to the periplasmic pilus chaperone family.

It localises to the periplasm. In terms of biological role, involved in the biogenesis of the AAF/I fimbriae. The chain is Chaperone protein AggD (aggD) from Escherichia coli.